Consider the following 2281-residue polypeptide: Retinal-specific phospholipid-transporting ATPase ABCA4 (2281 aa).

The Cytoplasmic portion of the chain corresponds to M1–R24. The helical transmembrane segment at F25 to V45 threads the bilayer. At N46–S646 the chain is on the extracellular side. Intrachain disulfides connect C54–C81 and C75–C324. N98 carries N-linked (GlcNAc...) asparagine glycosylation. Residues S336 and N338 each contribute to the Mg(2+) site. A disulfide bridge connects residues C370 and C519. N415 and N504 each carry an N-linked (Hex...) asparagine glycan. Residues R587 and R653 each contribute to the an N-all-trans-retinylidenephosphatidylethanolamine site. 3 cysteine pairs are disulfide-bonded: C641-C1488, C1442-C1453, and C1486-C1500. The helical transmembrane segment at F647–V667 threads the bilayer. Residues S668–T699 are Cytoplasmic-facing. A helical membrane pass occupies residues W700–M720. Residues H721–P730 lie on the Extracellular side of the membrane. A helical membrane pass occupies residues F731–L751. Residues S752 to S759 are Cytoplasmic-facing. A helical membrane pass occupies residues L760–F780. Over A781–S835 the chain is Extracellular. Residues F836–Y856 form a helical membrane-spanning segment. Over L857–Q1374 the chain is Cytoplasmic. T901 is subject to Phosphothreonine. An ABC transporter 1 domain is found at V929 to V1160. Residues F938, G966, and K969 each contribute to the ATP site. T970 is a Mg(2+) binding site. Residues T971, Q1010, K1054, G1064, G1065, and H1118 each coordinate ATP. Phosphoserine is present on S1185. The interval E1295–S1340 is disordered. Residues A1310–S1319 are compositionally biased toward polar residues. T1313 carries the phosphothreonine modification. Residues S1317 and S1319 each carry the phosphoserine modification. Residues I1375–F1395 traverse the membrane as a helical segment. The Extracellular segment spans residues G1396 to V1679. Residue N1455 is glycosylated (N-linked (Hex...) asparagine). Residue N1527 is glycosylated (N-linked (Hex...) asparagine). A glycan (N-linked (GlcNAc...) asparagine) is linked at N1586. Residue N1660 is glycosylated (N-linked (Hex...) asparagine). The chain crosses the membrane as a helical span at residues V1680–I1700. The Cytoplasmic portion of the chain corresponds to Q1701–N1725. Residues F1726 to G1746 form a helical membrane-spanning segment. The Extracellular portion of the chain corresponds to F1747–N1757. A helical membrane pass occupies residues L1758–P1778. Over A1779 to Y1790 the chain is Cytoplasmic. A helical transmembrane segment spans residues V1791–L1811. Topologically, residues E1812 to K1829 are extracellular. The N-linked (GlcNAc...) asparagine glycan is linked to N1817. Residues L1830 to Q1850 form a helical membrane-spanning segment. Residues A1851–A1879 are Cytoplasmic-facing. Residues M1880–F1900 traverse the membrane as a helical segment. Over S1901–G2281 the chain is Extracellular. The N-linked (GlcNAc...) asparagine glycan is linked to N1931. One can recognise an ABC transporter 2 domain in the interval L1936–K2168. Residues N1972, G1973, K1976, T1977, and T1978 each coordinate ATP. Position 1977 (T1977) interacts with Mg(2+). N-linked (GlcNAc...) asparagine glycans are attached at residues N2004 and N2050. G2071 is an ATP binding site. Positions V2242–A2247 are essential for ATP binding and ATPase activity. N2251 carries N-linked (GlcNAc...) asparagine glycosylation. Residues A2262–G2281 form a disordered region.

In terms of processing, N-glycosylated. Post-translationally, proteolytic cleavage by trypsin leads to a 120-kDa N-terminal fragment and a 115-kDa C-terminal fragment that are linked through disulfide bonds. Phosphorylation is independent of light exposure and modulates ATPase activity. Expressed in retina namely in the periphery and incisures of the rod outer segments (ROS).

It is found in the membrane. Its subcellular location is the cell projection. It localises to the cilium. The protein localises to the photoreceptor outer segment. The protein resides in the cytoplasmic vesicle. It is found in the endoplasmic reticulum. It carries out the reaction ATP + H2O + phospholipidSide 1 = ADP + phosphate + phospholipidSide 2.. The enzyme catalyses an N-all-trans-retinylidenephosphatidylethanolamine(out) + ATP + H2O = an N-all-trans-retinylidenephosphatidylethanolamine(in) + ADP + phosphate + H(+). The catalysed reaction is a 1,2-diacyl-sn-glycero-3-phosphoethanolamine(out) + ATP + H2O = a 1,2-diacyl-sn-glycero-3-phosphoethanolamine(in) + ADP + phosphate + H(+). It catalyses the reaction N-11-cis-retinylidenephosphatidylethanolamine(out) + ATP + H2O = N-11-cis-retinylidenephosphatidylethanolamine(in) + ADP + phosphate + H(+). It carries out the reaction ATP + H2O = ADP + phosphate + H(+). Its activity is regulated as follows. All-trans-retinal transport activity is reduced by EDTA chelation of Mg2+. All-trans-retinal transport activity is inhibited by N-ethylmaleimide (NEM). Phosphatidylethanolamine transport is strongly inhibited by beryllium fluoride and NEM. Functionally, flippase that catalyzes in an ATP-dependent manner the transport of retinal-phosphatidylethanolamine conjugates like the 11-cis and all-trans isomers of N-retinylidene-phosphatidylethanolamine from the lumen to the cytoplasmic leaflet of photoreceptor outer segment disk membranes, where N-cis-retinylidene-phosphatidylethanolamine (N-cis-R-PE) is then isomerized to its all-trans isomer (N-trans-R-PE) and reduced by RDH8 to produce all-trans-retinol (all-trans-rol) and therefore prevents the accumulation of excess of 11-cis-retinal and its schiff-base conjugate and the formation of toxic bisretinoid. Displays both ATPase and GTPase activity that is strongly influenced by the lipid environment and the presence of retinoid compounds. Binds the unprotonated form of N-retinylidene-phosphatidylethanolamine with high affinity in the absence of ATP and ATP binding and hydrolysis induce a protein conformational change that causes the dissociation of N-retinylidene-phosphatidylethanolamine. The polypeptide is Retinal-specific phospholipid-transporting ATPase ABCA4 (Bos taurus (Bovine)).